We begin with the raw amino-acid sequence, 193 residues long: Xanthine phosphoribosyltransferase (193 aa).

Xanthine is bound by residues Leu-20 and Thr-27. Position 128-132 (128-132 (ANGQA)) interacts with 5-phospho-alpha-D-ribose 1-diphosphate. Lys-156 serves as a coordination point for xanthine.

It belongs to the purine/pyrimidine phosphoribosyltransferase family. Xpt subfamily. As to quaternary structure, homodimer.

It is found in the cytoplasm. The enzyme catalyses XMP + diphosphate = xanthine + 5-phospho-alpha-D-ribose 1-diphosphate. Its pathway is purine metabolism; XMP biosynthesis via salvage pathway; XMP from xanthine: step 1/1. In terms of biological role, converts the preformed base xanthine, a product of nucleic acid breakdown, to xanthosine 5'-monophosphate (XMP), so it can be reused for RNA or DNA synthesis. The protein is Xanthine phosphoribosyltransferase of Streptococcus equi subsp. equi (strain 4047).